The sequence spans 1578 residues: Pentafunctional AROM polypeptide (1578 aa).

Residues 1–393 (MSVELAKVSI…YGTSAHVVSD (393 aa)) form a 3-dehydroquinate synthase region. NAD(+) contacts are provided by residues 44–46 (DTN), 79–82 (EAHK), 110–112 (GGV), and D115. R126 serves as a coordination point for 7-phospho-2-dehydro-3-deoxy-D-arabino-heptonate. 135 to 136 (TS) is a binding site for NAD(+). The 7-phospho-2-dehydro-3-deoxy-D-arabino-heptonate site is built by D142 and K148. NAD(+) is bound at residue K157. Position 158 (N158) interacts with 7-phospho-2-dehydro-3-deoxy-D-arabino-heptonate. NAD(+) is bound by residues 175-178 (WLET) and N186. E190 lines the Zn(2+) pocket. 7-phospho-2-dehydro-3-deoxy-D-arabino-heptonate-binding positions include 190-193 (EVIK) and K259. E269 acts as the Proton acceptor; for 3-dehydroquinate synthase activity in catalysis. 7-phospho-2-dehydro-3-deoxy-D-arabino-heptonate-binding positions include 273 to 277 (RNLLN) and H280. H280 is a binding site for Zn(2+). H284 (proton acceptor; for 3-dehydroquinate synthase activity) is an active-site residue. Residues H296 and K365 each coordinate 7-phospho-2-dehydro-3-deoxy-D-arabino-heptonate. H296 serves as a coordination point for Zn(2+). Residues 406–863 (VHPFNNIPEG…WDVLHSQLGA (458 aa)) are EPSP synthase. C845 acts as the For EPSP synthase activity in catalysis. Residues 882–1071 (VVIIGMRAAG…VPSRRSAFVC (190 aa)) form a shikimate kinase region. 886–893 (GMRAAGKS) is an ATP binding site. The 3-dehydroquinase stretch occupies residues 1072 to 1284 (LTFEDLSDHL…AAPGQLTLAE (213 aa)). Residue H1189 is the Proton acceptor; for 3-dehydroquinate dehydratase activity of the active site. K1218 serves as the catalytic Schiff-base intermediate with substrate; for 3-dehydroquinate dehydratase activity. A shikimate dehydrogenase region spans residues 1297–1578 (AKKFFVIGSP…KAIFDAVTQE (282 aa)).

It in the N-terminal section; belongs to the sugar phosphate cyclases superfamily. Dehydroquinate synthase family. This sequence in the 2nd section; belongs to the EPSP synthase family. The protein in the 3rd section; belongs to the shikimate kinase family. In the 4th section; belongs to the type-I 3-dehydroquinase family. It in the C-terminal section; belongs to the shikimate dehydrogenase family. In terms of assembly, homodimer. The cofactor is Zn(2+).

It is found in the cytoplasm. The catalysed reaction is 7-phospho-2-dehydro-3-deoxy-D-arabino-heptonate = 3-dehydroquinate + phosphate. It carries out the reaction 3-dehydroquinate = 3-dehydroshikimate + H2O. The enzyme catalyses shikimate + NADP(+) = 3-dehydroshikimate + NADPH + H(+). It catalyses the reaction shikimate + ATP = 3-phosphoshikimate + ADP + H(+). The catalysed reaction is 3-phosphoshikimate + phosphoenolpyruvate = 5-O-(1-carboxyvinyl)-3-phosphoshikimate + phosphate. The protein operates within metabolic intermediate biosynthesis; chorismate biosynthesis; chorismate from D-erythrose 4-phosphate and phosphoenolpyruvate: step 2/7. It functions in the pathway metabolic intermediate biosynthesis; chorismate biosynthesis; chorismate from D-erythrose 4-phosphate and phosphoenolpyruvate: step 3/7. It participates in metabolic intermediate biosynthesis; chorismate biosynthesis; chorismate from D-erythrose 4-phosphate and phosphoenolpyruvate: step 4/7. Its pathway is metabolic intermediate biosynthesis; chorismate biosynthesis; chorismate from D-erythrose 4-phosphate and phosphoenolpyruvate: step 5/7. The protein operates within metabolic intermediate biosynthesis; chorismate biosynthesis; chorismate from D-erythrose 4-phosphate and phosphoenolpyruvate: step 6/7. The AROM polypeptide catalyzes 5 consecutive enzymatic reactions in prechorismate polyaromatic amino acid biosynthesis. This Kluyveromyces lactis (strain ATCC 8585 / CBS 2359 / DSM 70799 / NBRC 1267 / NRRL Y-1140 / WM37) (Yeast) protein is Pentafunctional AROM polypeptide.